The sequence spans 2534 residues: Highly reducing polyketide synthase easB (2534 aa).

The tract at residues 1–49 (MSPASRSRVEIADSESDSERLSSSPWSILSDNDSNTSDERSTRAGPGSL) is disordered. A Ketosynthase family 3 (KS3) domain is found at 49–470 (LEPIAVIGIG…GTNAHVIIDA (422 aa)). Residues C222, H356, and H396 each act as for beta-ketoacyl synthase activity in the active site. The segment at 587 to 885 (IFSGQGAQYA…LSGPVNQILK (299 aa)) is malonyl-CoA:ACP transacylase (MAT) domain. Positions 973-1111 (HELLGTLSAD…GLVQAEVDSV (139 aa)) are N-terminal hotdog fold. Residues 973–1273 (HELLGTLSAD…QGIRVTSLGG (301 aa)) are dehydratase (DH) domain. Positions 973 to 1277 (HELLGTLSAD…VTSLGGDVAA (305 aa)) constitute a PKS/mFAS DH domain. H1005 (proton acceptor; for dehydratase activity) is an active-site residue. The C-terminal hotdog fold stretch occupies residues 1131–1277 (THGTIPQKFY…VTSLGGDVAA (147 aa)). The Proton donor; for dehydratase activity role is filled by D1193. The methyltransferase (CMet) domain stretch occupies residues 1395–1625 (KTSALSLLTK…VFISTAPFPR (231 aa)). Residues 1834–2146 (GLLETIRWKD…AGKHTGKIVL (313 aa)) are enoyl reductase (ER) domain. The 78-residue stretch at 2452–2529 (EAVHIVTNAI…QLAAIVAKES (78 aa)) folds into the Carrier domain. Residues 2453–2526 (AVHIVTNAIL…SISQLAAIVA (74 aa)) form a ketoreductase (KR) domain region. At S2489 the chain carries O-(pantetheine 4'-phosphoryl)serine.

Its pathway is antibiotic biosynthesis. Its function is as follows. Polyketide synthase; part of the gene cluster that mediates the biosynthesis of emericellamides, secondary metabolites acting as antibiotics. The biosynthesis of emericellamides initiates from the highly reducing polyketide synthase easB which catalyzes the formation of the linear polyketide chain. EasB produces several polyketides that can be further processed by the downstream enzymes. The polyketides are released from easB as linear polyketide carboxylic acids, which are converted to CoA thioesters by the acyl-CoA ligase easD. The substrates are then loaded onto the acyltransferase easC, which shuttles them to the first thiolation (T) domain of the nonribosomal peptide synthetase easA. EasA then performs condensation of the polyketides with one glycine, two alanine, one valine and one leucine residues. A last step of cyclization leads to the production of emericellamides. The chain is Highly reducing polyketide synthase easB from Emericella nidulans (strain FGSC A4 / ATCC 38163 / CBS 112.46 / NRRL 194 / M139) (Aspergillus nidulans).